Reading from the N-terminus, the 282-residue chain is Bis(5'-nucleosyl)-tetraphosphatase, symmetrical (282 aa).

This sequence belongs to the Ap4A hydrolase family.

It carries out the reaction P(1),P(4)-bis(5'-adenosyl) tetraphosphate + H2O = 2 ADP + 2 H(+). Hydrolyzes diadenosine 5',5'''-P1,P4-tetraphosphate to yield ADP. The polypeptide is Bis(5'-nucleosyl)-tetraphosphatase, symmetrical (Escherichia coli O127:H6 (strain E2348/69 / EPEC)).